Consider the following 106-residue polypeptide: Large ribosomal subunit protein uL24 (106 aa).

The protein belongs to the universal ribosomal protein uL24 family. As to quaternary structure, part of the 50S ribosomal subunit.

Its function is as follows. One of two assembly initiator proteins, it binds directly to the 5'-end of the 23S rRNA, where it nucleates assembly of the 50S subunit. One of the proteins that surrounds the polypeptide exit tunnel on the outside of the subunit. The chain is Large ribosomal subunit protein uL24 from Laribacter hongkongensis (strain HLHK9).